The chain runs to 379 residues: Chaperone protein DnaJ (379 aa).

Residues 5–69 (DYYEVLGISK…NKRASYDQFG (65 aa)) form the J domain. The CR-type zinc finger occupies 136 to 218 (GTTKEISIRK…CHGKGTENKT (83 aa)). Zn(2+) is bound by residues C149, C152, C166, C169, C192, C195, C206, and C209. 4 CXXCXGXG motif repeats span residues 149-156 (CETCHGDG), 166-173 (CSYCNGAG), 192-199 (CPKCNGSG), and 206-213 (CPTCHGKG).

The protein belongs to the DnaJ family. Homodimer. The cofactor is Zn(2+).

Its subcellular location is the cytoplasm. In terms of biological role, participates actively in the response to hyperosmotic and heat shock by preventing the aggregation of stress-denatured proteins and by disaggregating proteins, also in an autonomous, DnaK-independent fashion. Unfolded proteins bind initially to DnaJ; upon interaction with the DnaJ-bound protein, DnaK hydrolyzes its bound ATP, resulting in the formation of a stable complex. GrpE releases ADP from DnaK; ATP binding to DnaK triggers the release of the substrate protein, thus completing the reaction cycle. Several rounds of ATP-dependent interactions between DnaJ, DnaK and GrpE are required for fully efficient folding. Also involved, together with DnaK and GrpE, in the DNA replication of plasmids through activation of initiation proteins. The polypeptide is Chaperone protein DnaJ (Staphylococcus aureus (strain bovine RF122 / ET3-1)).